Reading from the N-terminus, the 474-residue chain is Gamma-aminobutyric acid receptor subunit beta-1 (474 aa).

A signal peptide spans Met1–Ala25. The Extracellular portion of the chain corresponds to His26 to Tyr245. N-linked (GlcNAc...) asparagine glycosylation is found at Asn33 and Asn105. Residue Tyr122 participates in histamine binding. A disulfide bridge links Cys161 with Cys175. Asn174 is a glycosylation site (N-linked (GlcNAc...) asparagine). Histamine is bound by residues Ser181–Tyr182 and Thr227. Tyr182 and Thr227 together coordinate 4-aminobutanoate. 3 helical membrane-spanning segments follow: residues Phe246–Ile267, Ala271–Leu293, and Ala305–Val327. At Asn328–Lys451 the chain is on the cytoplasmic side. Residues Trp452–Val473 traverse the membrane as a helical segment.

The protein belongs to the ligand-gated ion channel (TC 1.A.9) family. Gamma-aminobutyric acid receptor (TC 1.A.9.5) subfamily. GABRB1 sub-subfamily. Heteropentamer, formed by a combination of alpha (GABRA1-6), beta (GABRB1-3), gamma (GABRG1-3), delta (GABRD), epsilon (GABRE), rho (GABRR1-3), pi (GABRP) and theta (GABRQ) chains, each subunit exhibiting distinct physiological and pharmacological properties. Binds UBQLN1.

The protein localises to the postsynaptic cell membrane. It localises to the cell membrane. The catalysed reaction is chloride(in) = chloride(out). With respect to regulation, potentiated by histamine. Its function is as follows. Beta subunit of the heteropentameric ligand-gated chloride channel gated by gamma-aminobutyric acid (GABA), a major inhibitory neurotransmitter in the brain. GABA-gated chloride channels, also named GABA(A) receptors (GABAAR), consist of five subunits arranged around a central pore and contain GABA active binding site(s) located at the alpha and beta subunit interface(s). When activated by GABA, GABAARs selectively allow the flow of chloride anions across the cell membrane down their electrochemical gradient. Chloride influx into the postsynaptic neuron following GABAAR opening decreases the neuron ability to generate a new action potential, thereby reducing nerve transmission. Beta-containing GABAARs can simultaneously bind GABA and histamine where histamine binds at the interface of two neighboring beta subunits, which may be involved in the regulation of sleep and wakefulness. The protein is Gamma-aminobutyric acid receptor subunit beta-1 of Rattus norvegicus (Rat).